We begin with the raw amino-acid sequence, 362 residues long: Probable branched-chain-amino-acid aminotransferase (362 aa).

K202 bears the N6-(pyridoxal phosphate)lysine mark.

This sequence belongs to the class-IV pyridoxal-phosphate-dependent aminotransferase family. It depends on pyridoxal 5'-phosphate as a cofactor.

It carries out the reaction L-leucine + 2-oxoglutarate = 4-methyl-2-oxopentanoate + L-glutamate. It catalyses the reaction L-isoleucine + 2-oxoglutarate = (S)-3-methyl-2-oxopentanoate + L-glutamate. The catalysed reaction is L-valine + 2-oxoglutarate = 3-methyl-2-oxobutanoate + L-glutamate. Its pathway is amino-acid biosynthesis; L-isoleucine biosynthesis; L-isoleucine from 2-oxobutanoate: step 4/4. It participates in amino-acid biosynthesis; L-leucine biosynthesis; L-leucine from 3-methyl-2-oxobutanoate: step 4/4. It functions in the pathway amino-acid biosynthesis; L-valine biosynthesis; L-valine from pyruvate: step 4/4. Functionally, acts on leucine, isoleucine and valine. The sequence is that of Probable branched-chain-amino-acid aminotransferase (ilvE) from Streptomyces coelicolor (strain ATCC BAA-471 / A3(2) / M145).